The following is a 264-amino-acid chain: Tryptophan synthase alpha chain (264 aa).

Catalysis depends on proton acceptor residues glutamate 49 and aspartate 60.

Belongs to the TrpA family. Tetramer of two alpha and two beta chains.

It carries out the reaction (1S,2R)-1-C-(indol-3-yl)glycerol 3-phosphate + L-serine = D-glyceraldehyde 3-phosphate + L-tryptophan + H2O. It functions in the pathway amino-acid biosynthesis; L-tryptophan biosynthesis; L-tryptophan from chorismate: step 5/5. Functionally, the alpha subunit is responsible for the aldol cleavage of indoleglycerol phosphate to indole and glyceraldehyde 3-phosphate. The polypeptide is Tryptophan synthase alpha chain (Synechocystis sp. (strain ATCC 27184 / PCC 6803 / Kazusa)).